The following is a 313-amino-acid chain: MQPLVILTGPTAVGKTKLSIDLAKSINGEIISADSMQVYRHMDIGTAKITPEEMEGVTHYLVDEFEPDEEFNVVKFKDCAKEAIREIYSKGKVPIIVGGTGFYIQAVLKDIDFTENDSDTPYRKELEELAQTEGAIKLHDILKQCDPVAAEAIHPNNIKRTIRAIEYFKLTGEPISKHNEEQRGNESPYQYAYFVLNNDREILYENIDLRVDKMLDAGLVKEVLWLKEQGYDRSLVSMQGLGYKEIYAYLEGECSLEETVYLLKRDTRHFAKRQLTWFKREQDVIWLSKKDYNSDASILTEMVKILTEKEIIK.

9-16 (GPTAVGKT) provides a ligand contact to ATP. 11–16 (TAVGKT) serves as a coordination point for substrate. The interaction with substrate tRNA stretch occupies residues 34-37 (DSMQ).

The protein belongs to the IPP transferase family. In terms of assembly, monomer. It depends on Mg(2+) as a cofactor.

It catalyses the reaction adenosine(37) in tRNA + dimethylallyl diphosphate = N(6)-dimethylallyladenosine(37) in tRNA + diphosphate. Functionally, catalyzes the transfer of a dimethylallyl group onto the adenine at position 37 in tRNAs that read codons beginning with uridine, leading to the formation of N6-(dimethylallyl)adenosine (i(6)A). This chain is tRNA dimethylallyltransferase, found in Lachnoclostridium phytofermentans (strain ATCC 700394 / DSM 18823 / ISDg) (Clostridium phytofermentans).